We begin with the raw amino-acid sequence, 660 residues long: Leucine-rich repeat transmembrane protein FLRT2 (660 aa).

Positions 1–35 (MGLQTAKWPSHGTFVLKFWLIMSLGLYSHVSKLLA) are cleaved as a signal peptide. Intrachain disulfides connect C36-C42 and C40-C49. The 32-residue stretch at 36-67 (CPSVCRCDRNFVYCNERSLTSVPLGIPEGVTV) folds into the LRRNT domain. At 36–540 (CPSVCRCDRN…QTTSHTMGSP (505 aa)) the chain is on the extracellular side. 10 LRR repeats span residues 62–87 (PEGVTVLYLHNNQINNAGFPAELHNV), 88–108 (QSVHTVYLYGNQLDEFPMNLP), 109–131 (KNVRVLHLQENNIQTISRAALAQ), 132–157 (LLKLEELHLDDNSISTVGVEDGAFRE), 159–181 (ISLKLLFLSKNHLSSVPVGLPVD), 183–202 (QELRVDENRIAVISDMAFQN), 203–228 (LTSLERLIVDGNLLTNKGIADGTFSH), 229–251 (LTKLKEFSIVRNSLSHPPPDLPG), 252–274 (THLIRLYLQDNQINHIPLTAFAN), and 275–298 (LRKLERLDISNNQLRMLTQGVFDH). N-linked (GlcNAc...) asparagine glycosylation is present at N202. Intrachain disulfides connect C314–C339 and C316–C360. In terms of domain architecture, LRRCT spans 338 to 361 (MCQGPEQVRGMAVRELNMNLLSCP). Over residues 372–396 (PAPSTVSPTTQSPTVSVPSPSRGSV) the composition is skewed to low complexity. The disordered stretch occupies residues 372–413 (PAPSTVSPTTQSPTVSVPSPSRGSVPPAPAPSKLPTIPDWDG). One can recognise a Fibronectin type-III domain in the interval 419-517 (PPISERIQLS…ICSEATTHAS (99 aa)). Residues 541–561 (FLLAGLIGGAVIFVLVVLLSV) traverse the membrane as a helical segment. At 562-660 (FCWHMHKKGR…SVPDLEHCHT (99 aa)) the chain is on the cytoplasmic side.

Self-associates (via leucine-rich repeats), giving rise to homooligomers. Interacts with FGFR1. Interacts with FGFR2. Interacts (via extracellular domain) with ADGRL1/LPHN1. Interacts (via extracellular domain) with ADGRL3 (via olfactomedin-like domain). Interacts (via extracellular domain) with UNC5D (via the first Ig-like domain). Can also interact (via extracellular domain) with UNC5B, but with much lower affinity. Interacts (via extracellular domain) with FN1. In terms of processing, N-glycosylated. Proteolytic cleavage in the juxtamembrane region gives rise to a soluble ectodomain. Cleavage is probably effected by a metalloprotease. Detected in brain (at protein level).

The protein resides in the cell membrane. Its subcellular location is the endoplasmic reticulum membrane. The protein localises to the synapse. It localises to the synaptosome. It is found in the cell junction. The protein resides in the focal adhesion. Its subcellular location is the secreted. The protein localises to the extracellular space. It localises to the extracellular matrix. It is found in the microsome membrane. Functions in cell-cell adhesion, cell migration and axon guidance. Mediates cell-cell adhesion via its interactions with ADGRL3 and probably also other latrophilins that are expressed at the surface of adjacent cells. May play a role in the migration of cortical neurons during brain development via its interaction with UNC5D. Mediates axon growth cone collapse and plays a repulsive role in neuron guidance via its interaction with UNC5D, and possibly also other UNC-5 family members. Plays a role in fibroblast growth factor-mediated signaling cascades. Required for normal organization of the cardiac basement membrane during embryogenesis, and for normal embryonic epicardium and heart morphogenesis. This Rattus norvegicus (Rat) protein is Leucine-rich repeat transmembrane protein FLRT2.